Reading from the N-terminus, the 344-residue chain is Dihydroorotase (344 aa).

Zn(2+) contacts are provided by H14 and H16. Substrate-binding positions include 16-18 (HLR) and N42. The Zn(2+) site is built by K100, H137, and H175. K100 bears the N6-carboxylysine mark. H137 is a substrate binding site. Substrate is bound at residue L220. Residue D248 coordinates Zn(2+). The active site involves D248. Positions 252 and 264 each coordinate substrate.

The protein belongs to the metallo-dependent hydrolases superfamily. DHOase family. Class II DHOase subfamily. Homodimer. It depends on Zn(2+) as a cofactor.

The catalysed reaction is (S)-dihydroorotate + H2O = N-carbamoyl-L-aspartate + H(+). Its pathway is pyrimidine metabolism; UMP biosynthesis via de novo pathway; (S)-dihydroorotate from bicarbonate: step 3/3. Its function is as follows. Catalyzes the reversible cyclization of carbamoyl aspartate to dihydroorotate. The sequence is that of Dihydroorotase from Ralstonia nicotianae (strain ATCC BAA-1114 / GMI1000) (Ralstonia solanacearum).